The sequence spans 339 residues: tRNA (guanine-N(7)-)-methyltransferase (339 aa).

The disordered stretch occupies residues 1 to 20; sequence MTPPPAKRQKRNEYRKANTA. S-adenosyl-L-methionine is bound by residues G94 and 117 to 118; that span reads EI. Residues 141–186 form a disordered region; sequence RSSAIPSESSPAAQQPQQHHQQQLQATETAADAASPSSPDATGETL. The segment covering 142 to 181 has biased composition (low complexity); it reads SSAIPSESSPAAQQPQQHHQQQLQATETAADAASPSSPDA. Residues 202–203 and C222 each bind S-adenosyl-L-methionine; that span reads NT. D225 is an active-site residue. Position 311-313 (311-313) interacts with S-adenosyl-L-methionine; sequence TEE.

Belongs to the class I-like SAM-binding methyltransferase superfamily. TrmB family. Forms a complex with trm82.

The protein localises to the nucleus. It carries out the reaction guanosine(46) in tRNA + S-adenosyl-L-methionine = N(7)-methylguanosine(46) in tRNA + S-adenosyl-L-homocysteine. It functions in the pathway tRNA modification; N(7)-methylguanine-tRNA biosynthesis. Catalyzes the formation of N(7)-methylguanine at position 46 (m7G46) in tRNA. The polypeptide is tRNA (guanine-N(7)-)-methyltransferase (trm8) (Aspergillus clavatus (strain ATCC 1007 / CBS 513.65 / DSM 816 / NCTC 3887 / NRRL 1 / QM 1276 / 107)).